Here is a 354-residue protein sequence, read N- to C-terminus: MRSFSKILAVASLAAIANSAVLKRDNNVLEVTLVAGENAVVHASVKNVGAEDLNLLSYGSLFDTAPVQKINVYEGETAVPFKGVLRAIQRTDLAPEVFHTLAAGETFETSFNAAEVHDLSTSTYTFVAEGAIPFAKAGSTEISDSIIFKSNAITVSVDGEAAKSVAKAIPSSIDRRTVLQSGCSTSQRSATTQALSYCASLARAASTAASSGSSTKFSEYFKTTSSSTRSVVAARLSAVASQCSSLTSGSTKYYCTDVYGYCESNVLAYTIPSTNEIVNCPIYYSALPALTGTCHAQDRATTTLHEFTHAPATYSPGTADNGYGYAAATALTSARAVLNADSYALYANAIYVGC.

The N-terminal stretch at methionine 1–serine 19 is a signal peptide. Positions alanine 20 to leucine 179 are excised as a propeptide. Disulfide bonds link cysteine 183/cysteine 255 and cysteine 262/cysteine 280. A Zn(2+)-binding site is contributed by histidine 305. Glutamate 306 is a catalytic residue. Positions 309 and 320 each coordinate Zn(2+).

It belongs to the peptidase M35 family. The cofactor is Zn(2+).

It is found in the secreted. It carries out the reaction Preferential cleavage of bonds with hydrophobic residues in P1'. Also 3-Asn-|-Gln-4 and 8-Gly-|-Ser-9 bonds in insulin B chain.. Functionally, secreted metalloproteinase that allows assimilation of proteinaceous substrates. Shows high activities on basic nuclear substrates such as histone and protamine. This Botryotinia fuckeliana (strain B05.10) (Noble rot fungus) protein is Neutral protease 2 homolog BCIN_12g06300.